A 522-amino-acid polypeptide reads, in one-letter code: Putative aldehyde dehydrogenase-like protein C21C3 (522 aa).

Glu-239 functions as the Proton acceptor in the catalytic mechanism. Cys-273 serves as the catalytic Nucleophile.

It belongs to the aldehyde dehydrogenase family.

It localises to the cytoplasm. The protein localises to the nucleus. The protein is Putative aldehyde dehydrogenase-like protein C21C3 of Schizosaccharomyces pombe (strain 972 / ATCC 24843) (Fission yeast).